The primary structure comprises 596 residues: Transcription factor COE3 (596 aa).

Residues 1–22 (MFGIQENIPRGGTTMKEEPLGS) are disordered. The segment at 63–66 (RKSN) is interaction with DNA. Residues 151–170 (CRVLLTHEIMCSRCCDKKSC) form a C5-type zinc finger. 2 interaction with DNA regions span residues 197-204 (NCLKNAGN) and 236-239 (NNSK). Residues 263-346 (PCIKAISPSE…KGAPGRFVYT (84 aa)) enclose the IPT/TIG domain. A disordered region spans residues 451 to 483 (TSQANDQVGYSRNTSSVSPRGYVPSSTPQQSNY).

This sequence belongs to the COE family. Forms either a homodimer or a heterodimer with a related family member. In terms of tissue distribution, expressed in brain.

The protein localises to the nucleus. Its function is as follows. Transcriptional activator. Recognizes variations of the palindromic sequence 5'-ATTCCCNNGGGAATT-3'. This Homo sapiens (Human) protein is Transcription factor COE3 (EBF3).